Reading from the N-terminus, the 200-residue chain is NAD(P)H dehydrogenase (quinone) (200 aa).

Residues 4–190 enclose the Flavodoxin-like domain; sequence VLVLYYSTYG…DGARFQGRLV (187 aa). FMN contacts are provided by residues 10-15 and 78-80; these read STYGHL and TRF. Position 12 (Y12) interacts with NAD(+). A substrate-binding site is contributed by W98. Residues 113-119 and H134 each bind FMN; that span reads STATQHG.

Belongs to the WrbA family. It depends on FMN as a cofactor.

The catalysed reaction is a quinone + NADH + H(+) = a quinol + NAD(+). It catalyses the reaction a quinone + NADPH + H(+) = a quinol + NADP(+). This chain is NAD(P)H dehydrogenase (quinone), found in Acidovorax ebreus (strain TPSY) (Diaphorobacter sp. (strain TPSY)).